The sequence spans 27 residues: iraD leader peptide (27 aa).

Its function is as follows. A short protein whose stop codon overlaps with the start codon of downstream iraD; its mRNA secondary structure is predicted to fold and sequester the Shine-Dalgarno sequence of iraD. When this protein is expressed the downstream iraD is also expressed due to ribosomal coupling. This Escherichia coli (strain K12) protein is iraD leader peptide (idlP).